The sequence spans 316 residues: Transaldolase (316 aa).

The Schiff-base intermediate with substrate role is filled by Lys132.

The protein belongs to the transaldolase family. Type 1 subfamily. As to quaternary structure, homodimer.

It localises to the cytoplasm. The catalysed reaction is D-sedoheptulose 7-phosphate + D-glyceraldehyde 3-phosphate = D-erythrose 4-phosphate + beta-D-fructose 6-phosphate. Its pathway is carbohydrate degradation; pentose phosphate pathway; D-glyceraldehyde 3-phosphate and beta-D-fructose 6-phosphate from D-ribose 5-phosphate and D-xylulose 5-phosphate (non-oxidative stage): step 2/3. Transaldolase is important for the balance of metabolites in the pentose-phosphate pathway. This Methylobacillus flagellatus (strain ATCC 51484 / DSM 6875 / VKM B-1610 / KT) protein is Transaldolase.